A 1177-amino-acid polypeptide reads, in one-letter code: Tyrosine-protein kinase hopscotch (1177 aa).

Residues 1 to 41 are disordered; that stretch reads MALANGGEDRMDDSSSGRTSLADSASLTNSSLRSGTSSQSI. Residues 16–41 are compositionally biased toward polar residues; it reads SGRTSLADSASLTNSSLRSGTSSQSI. Residues serine 40 and serine 321 each carry the phosphoserine modification. Residues 46–414 form the FERM domain; it reads GTIRVFNFTT…IYIRLSSKWM (369 aa). The SH2; atypical domain maps to 433-539; that stretch reads HCHGPIGGAY…YRIPASKYDK (107 aa). Protein kinase domains lie at 582–843 and 892–1164; these read YPDS…AEIL and YNME…HPTD. Residues 898-906 and lysine 926 contribute to the ATP site; that span reads IGRGHYGTV. Residue aspartate 1014 is the Proton acceptor of the active site. Tyrosine 1047 and tyrosine 1048 each carry phosphotyrosine; by autocatalysis. The tract at residues 1158–1177 is disordered; the sequence is KVTHPTDGHQSPPNQPTDAE.

Belongs to the protein kinase superfamily. Tyr protein kinase family. JAK subfamily. As to quaternary structure, forms a complex with Hsp83 and piwi; probably Hop mediates the interaction between piwi and Hsp83.

Its subcellular location is the endomembrane system. It catalyses the reaction L-tyrosyl-[protein] + ATP = O-phospho-L-tyrosyl-[protein] + ADP + H(+). Tyrosine kinase of the non-receptor type, phosphorylates the marelle protein. Required maternally for the establishment of the normal array of embryonic segments: involved in the control of pair-rule gene transcription in a stripe-specific manner. Together with Hsp83 and piwi, mediates canalization, also known as developmental robustness, likely via epigenetic silencing of existing genetic variants and suppression of transposon-induced new genetic variation. In Drosophila melanogaster (Fruit fly), this protein is Tyrosine-protein kinase hopscotch (hop).